We begin with the raw amino-acid sequence, 387 residues long: Patatin group D-3 (387 aa).

An N-terminal signal peptide occupies residues Met1 to Ala23. One can recognise a PNPLA domain in the interval Leu32 to Ile230. The GXGXXG motif lies at Gly36 to Gly41. The GXSXG signature appears at Gly75–Gly79. Catalysis depends on Ser77, which acts as the Nucleophile. Asn115 is a glycosylation site (N-linked (GlcNAc...) asparagine). The active-site Proton acceptor is the Asp216. The DGA/G motif lies at Asp216–Ala218. A coiled-coil region spans residues Glu361–Ala385.

It belongs to the patatin family. Tuber.

It is found in the vacuole. Its function is as follows. Probable lipolytic acyl hydrolase (LAH), an activity which is thought to be involved in the response of tubers to pathogens. This is Patatin group D-3 from Solanum tuberosum (Potato).